The following is a 100-amino-acid chain: MEIAVIGNKEFVLGFQLAGIKKTYSAENPEKLAETITKVLDDTNVGILVLQSTDLEQIPRRLQVIIENSVKPTIVTIGGQEAGLSLRERIKRSVGVDLWK.

The protein belongs to the V-ATPase F subunit family. In terms of assembly, has multiple subunits with at least A(3), B(3), C, D, E, F, H, I and proteolipid K(x).

The protein localises to the cell membrane. Functionally, component of the A-type ATP synthase that produces ATP from ADP in the presence of a proton gradient across the membrane. This chain is A-type ATP synthase subunit F, found in Methanocorpusculum labreanum (strain ATCC 43576 / DSM 4855 / Z).